The following is a 148-amino-acid chain: Large ribosomal subunit protein uL15 (148 aa).

Residues methionine 1–leucine 61 form a disordered region. Basic residues predominate over residues threonine 30–lysine 39.

It belongs to the universal ribosomal protein uL15 family. In terms of assembly, part of the 50S ribosomal subunit.

Binds to the 23S rRNA. In Geobacter metallireducens (strain ATCC 53774 / DSM 7210 / GS-15), this protein is Large ribosomal subunit protein uL15.